Reading from the N-terminus, the 130-residue chain is Small ribosomal subunit protein uS8 (130 aa).

The protein belongs to the universal ribosomal protein uS8 family. As to quaternary structure, part of the 30S ribosomal subunit. Contacts proteins S5 and S12.

Its function is as follows. One of the primary rRNA binding proteins, it binds directly to 16S rRNA central domain where it helps coordinate assembly of the platform of the 30S subunit. This Alcanivorax borkumensis (strain ATCC 700651 / DSM 11573 / NCIMB 13689 / SK2) protein is Small ribosomal subunit protein uS8.